The sequence spans 483 residues: MSTARTENPVIMGLSSQNGQLRGPVKPSGGPGGGGTQTQQQMNQLKNANTINNGTQQQAQSMTTTIKPGDDWKKTLKLPPKDLRIKTSDVTSTKGNEFEDYCLKRELLMGIFEMGWEKPSPIQEESIPIALSGRDILARAKNGTGKSGAYLIPLLERLDLKKDNIQAMVIVPTRELALQVSQICIQVSKHMGGAKVMATTGGTNLRDDIMRLDDTVHVVIATPGRILDLIKKGVAKVEHVQMIVLDEADKLLSQDFVQIMEDIILTLPKNRQILLYSATFPLSVQKFMNSHLQKPYEINLMEELTLKGVTQYYAYVTERQKVHCLNTLFSRLQINQSIIFCNSSQRVELLAKKISQLGYSCFYIHAKMRQEHRNRVFHDFRNGLCRNLVCTDLFTRGIDIQAVNVVINFDFPKLAETYLHRIGRSGRFGHLGLAINLITYDDRFNLKSIEEQLGTEIKPIPSNIDKSLYVAEYHSEPVEDEKQ.

2 disordered regions span residues 1–39 (MSTA…TQTQ) and 55–75 (TQQQ…WKKT). Positions 55-66 (TQQQAQSMTTTI) are enriched in polar residues. The Q motif signature appears at 96 to 124 (NEFEDYCLKRELLMGIFEMGWEKPSPIQE). The region spanning 127–298 (IPIALSGRDI…NSHLQKPYEI (172 aa)) is the Helicase ATP-binding domain. 140-147 (AKNGTGKS) contributes to the ATP binding site. The short motif at 246–249 (DEAD) is the DEAD box element. One can recognise a Helicase C-terminal domain in the interval 308 to 468 (GVTQYYAYVT…PIPSNIDKSL (161 aa)).

Belongs to the DEAD box helicase family. DDX6/DHH1 subfamily.

The protein resides in the cytoplasm. The protein localises to the P-body. Its subcellular location is the nucleus. It carries out the reaction ATP + H2O = ADP + phosphate + H(+). Its function is as follows. Essential for the formation of P-bodies, cytosolic membrane-less ribonucleoprotein granules involved in RNA metabolism through the coordinated storage of mRNAs encoding regulatory functions. Plays a role in P-bodies to coordinate the storage of translationally inactive mRNAs in the cytoplasm and prevent their degradation. This chain is Probable ATP-dependent RNA helicase DDX6 (DDX6), found in Gallus gallus (Chicken).